The chain runs to 373 residues: Spermidine/putrescine import ATP-binding protein PotA (373 aa).

Residues 5-235 form the ABC transporter domain; the sequence is IVFEHVSKKF…PKSSFVADFI (231 aa). Position 37–44 (37–44) interacts with ATP; sequence GPSGCGKT.

Belongs to the ABC transporter superfamily. Spermidine/putrescine importer (TC 3.A.1.11.1) family. As to quaternary structure, the complex is composed of two ATP-binding proteins (PotA), two transmembrane proteins (PotB and PotC) and a solute-binding protein (PotD).

The protein localises to the cell inner membrane. It carries out the reaction ATP + H2O + polyamine-[polyamine-binding protein]Side 1 = ADP + phosphate + polyamineSide 2 + [polyamine-binding protein]Side 1.. In terms of biological role, part of the ABC transporter complex PotABCD involved in spermidine/putrescine import. Responsible for energy coupling to the transport system. In Protochlamydia amoebophila (strain UWE25), this protein is Spermidine/putrescine import ATP-binding protein PotA.